Consider the following 429-residue polypeptide: MDKIRIVGGNELKGTIPISGAKNAALPLMIASLLTEEKLILENVPRLADVALLQRILGNHGVDITTNGKRNGDDPYAGQTLEIDARVIVDTTAPYDLVSRMRASFWVLGPLLARIGVAKVSLPGGCAIGTRPVDFHLDALRALGAEIEIDAGYVVAKAPQGLKGARIVFPKVSVGATHTALMAATLARGDSIIENAAREPEVVDLADCLIKMGARITGAGSSTIHVEGVARLKAARHAVLPDRIETGTYAMATAMTGGDVMLAGARPDLLESALDALRQAGAEIDATNEGIRVRRNGAGILPVDVTTAPYPGFPTDLQAQFMALMTKAKGNCRITETIFENRFMHVQELARLGARIHLDGDTAVVEGVERLTGAPVMATDLRASVSLVIAGLAAEGETMVQRVYHLDRGFEKLEEKLSRCGAQIERISG.

Lys-22–Asn-23 contributes to the phosphoenolpyruvate binding site. Residue Arg-102 coordinates UDP-N-acetyl-alpha-D-glucosamine. Cys-126 (proton donor) is an active-site residue. Cys-126 is modified (2-(S-cysteinyl)pyruvic acid O-phosphothioketal). Residues Lys-171–Val-174, Asp-316, and Ile-338 contribute to the UDP-N-acetyl-alpha-D-glucosamine site.

The protein belongs to the EPSP synthase family. MurA subfamily.

Its subcellular location is the cytoplasm. The enzyme catalyses phosphoenolpyruvate + UDP-N-acetyl-alpha-D-glucosamine = UDP-N-acetyl-3-O-(1-carboxyvinyl)-alpha-D-glucosamine + phosphate. Its pathway is cell wall biogenesis; peptidoglycan biosynthesis. In terms of biological role, cell wall formation. Adds enolpyruvyl to UDP-N-acetylglucosamine. The protein is UDP-N-acetylglucosamine 1-carboxyvinyltransferase of Xanthobacter autotrophicus (strain ATCC BAA-1158 / Py2).